The following is a 302-amino-acid chain: Serine/threonine-protein phosphatase alpha-2 isoform (302 aa).

Mn(2+) is bound by residues Asp62, His64, Asp90, and Asn122. The Proton donor role is filled by His123. The Mn(2+) site is built by His171 and His246.

It belongs to the PPP phosphatase family. PP-1 subfamily. In terms of assembly, interacts with Nop17l. Interacts with uri; uri inhibits Pp1-87B phosphatase activity. Interacts with Rif1. Requires Mn(2+) as cofactor.

Its subcellular location is the cytoplasm. It catalyses the reaction O-phospho-L-seryl-[protein] + H2O = L-seryl-[protein] + phosphate. The catalysed reaction is O-phospho-L-threonyl-[protein] + H2O = L-threonyl-[protein] + phosphate. In terms of biological role, is essential for the regulation of mitotic chromosomal segregation as well as regulation of chromatin condensation during interphase. The protein is Serine/threonine-protein phosphatase alpha-2 isoform (Pp1-87B) of Drosophila melanogaster (Fruit fly).